The chain runs to 261 residues: Imidazole glycerol phosphate synthase subunit HisF (261 aa).

Active-site residues include Asp-16 and Asp-135.

This sequence belongs to the HisA/HisF family. Heterodimer of HisH and HisF.

The protein localises to the cytoplasm. The enzyme catalyses 5-[(5-phospho-1-deoxy-D-ribulos-1-ylimino)methylamino]-1-(5-phospho-beta-D-ribosyl)imidazole-4-carboxamide + L-glutamine = D-erythro-1-(imidazol-4-yl)glycerol 3-phosphate + 5-amino-1-(5-phospho-beta-D-ribosyl)imidazole-4-carboxamide + L-glutamate + H(+). The protein operates within amino-acid biosynthesis; L-histidine biosynthesis; L-histidine from 5-phospho-alpha-D-ribose 1-diphosphate: step 5/9. IGPS catalyzes the conversion of PRFAR and glutamine to IGP, AICAR and glutamate. The HisF subunit catalyzes the cyclization activity that produces IGP and AICAR from PRFAR using the ammonia provided by the HisH subunit. The protein is Imidazole glycerol phosphate synthase subunit HisF of Mycolicibacterium smegmatis (strain ATCC 700084 / mc(2)155) (Mycobacterium smegmatis).